The chain runs to 314 residues: Ketimine reductase mu-crystallin (314 aa).

Arg-47 contributes to the 3,3',5-triiodo-L-thyronine binding site. NADPH-binding residues include Ser-91, His-92, Arg-119, Ala-144, Val-146, Gln-147, Asn-168, Arg-169, Thr-170, Asn-173, Thr-205, and Met-206. Glu-257 serves as a coordination point for 3,3',5-triiodo-L-thyronine. An NADPH-binding site is contributed by Ser-292.

It belongs to the ornithine cyclodeaminase/mu-crystallin family. In terms of assembly, homodimer. Binds the thyroid hormone triiodothyronine (T3); T3 binding inhibits enzymatic activity.

It localises to the cytoplasm. The catalysed reaction is L-pipecolate + NAD(+) = Delta(1)-piperideine-2-carboxylate + NADH + H(+). The enzyme catalyses L-pipecolate + NADP(+) = Delta(1)-piperideine-2-carboxylate + NADPH + H(+). It catalyses the reaction L-proline + NADP(+) = 1-pyrroline-2-carboxylate + NADPH + H(+). It carries out the reaction L-proline + NAD(+) = 1-pyrroline-2-carboxylate + NADH + H(+). The catalysed reaction is (3R)-1,4-thiomorpholine-3-carboxylate + NAD(+) = 3,4-dehydrothiomorpholine-3-carboxylate + NADH + 2 H(+). The enzyme catalyses (3R)-1,4-thiomorpholine-3-carboxylate + NADP(+) = 3,4-dehydrothiomorpholine-3-carboxylate + NADPH + 2 H(+). It catalyses the reaction (S)-cystathionine ketimine + NADH + 2 H(+) = (3R,5S)-2,3,5,6,7-pentahydro-1,4-thiazepine-3,5-dicarboxylate + NAD(+). It carries out the reaction (S)-cystathionine ketimine + NADPH + 2 H(+) = (3R,5S)-2,3,5,6,7-pentahydro-1,4-thiazepine-3,5-dicarboxylate + NADP(+). The catalysed reaction is (R)-lanthionine ketimine + NADPH + 2 H(+) = (3R,5R)-1,4-thiomorpholine-3,5-dicarboxylate + NADP(+). The enzyme catalyses Delta(2)-thiazoline-2-carboxylate + NADPH + 2 H(+) = L-thiazolidine-2-carboxylate + NADP(+). Its function is as follows. Catalyzes the NAD(P)H-dependent reduction of imine double bonds of a number of cyclic ketimine substrates, including sulfur-containing cyclic ketimines. Under physiological conditions, it efficiently catalyzes delta(1)-piperideine-2-carboxylate (P2C) and delta(1)-pyrroline-2-carboxylate (Pyr2C) reduction, suggesting a central role in lysine and glutamate metabolism. Additional substrates are (S)-cystathionine ketimine (CysK), 3,4-dehydrothiomorpholine-3-carboxylate (AECK), and (R)-lanthionine ketimine (LK) that is reduced at very low rate compared to other substrates. Also catalyzes the NAD(P)H-dependent reduction of delta(2)-thiazoline-2-carboxylate (T2C). This Bos taurus (Bovine) protein is Ketimine reductase mu-crystallin (CRYM).